A 306-amino-acid chain; its full sequence is IN2-2 protein (306 aa).

The active-site Proton donor is the Y64. Substrate is bound at residue H131. NADP(+) is bound at residue 210–220 (SPLGRGFFSSG). Residues 272–306 (LGSPPRKRRLPHTWHNKNRQLQPERGGTVCEAYTG) form a disordered region. Residues 276 to 289 (PRKRRLPHTWHNKN) show a composition bias toward basic residues.

The protein belongs to the aldo/keto reductase family. Aldo/keto reductase 2 subfamily. Leaves and roots.

This Zea mays (Maize) protein is IN2-2 protein (IN2-2).